We begin with the raw amino-acid sequence, 1015 residues long: Tolloid-like protein 2 (1015 aa).

Positions 1-25 are cleaved as a signal peptide; the sequence is MPRATALGALVSLLLLLPLPRGAGG. Disordered regions lie at residues 24–49 and 88–130; these read GGLGERPDATADYSELDGEEGTEQQL and VGAT…TTLL. A propeptide spanning residues 26-149 is cleaved from the precursor; that stretch reads LGERPDATAD…AKTFSPRVRR (124 aa). The span at 103–113 shows a compositional bias: polar residues; it reads SESSPDTTAMD. A compositionally biased stretch (basic and acidic residues) spans 115–125; it reads GTKEAGKDGRE. The 201-residue stretch at 149–349 folds into the Peptidase M12A domain; that stretch reads RATTSRTERI…AQARKLYKCP (201 aa). An N-linked (GlcNAc...) asparagine glycan is attached at Asn-171. 4 disulfides stabilise this stretch: Cys-192-Cys-348, Cys-212-Cys-234, Cys-214-Cys-215, and Cys-351-Cys-377. His-242 contributes to the Zn(2+) binding site. Glu-243 is a catalytic residue. His-246 and His-252 together coordinate Zn(2+). CUB domains lie at 351–463 and 464–576; these read CGET…YEAT and CGGD…FFKE. Residues Asn-361 and Asn-392 are each glycosylated (N-linked (GlcNAc...) asparagine). Cystine bridges form between Cys-404–Cys-426, Cys-464–Cys-490, Cys-517–Cys-539, Cys-580–Cys-592, Cys-588–Cys-601, Cys-603–Cys-616, Cys-620–Cys-646, Cys-673–Cys-695, Cys-736–Cys-747, Cys-743–Cys-756, Cys-758–Cys-771, and Cys-776–Cys-802. Positions 576 to 617 constitute an EGF-like 1; calcium-binding domain; that stretch reads EVDECSWPDHGGCEHRCVNTLGSYKCACDPGYELAADKKMCE. In terms of domain architecture, CUB 3 spans 620–732; sequence CGGFITKLNG…RGFRAHFFSD (113 aa). A glycan (N-linked (GlcNAc...) asparagine) is linked at Asn-628. One can recognise an EGF-like 2; calcium-binding domain in the interval 732-772; that stretch reads DKDECAKDNGGCQHECVNTFGSYLCRCRNGYWLHENGHDCK. CUB domains follow at residues 776-888 and 889-1005; these read CAHK…HSTE and CGGR…YTST. An N-linked (GlcNAc...) asparagine glycan is attached at Asn-805. Intrachain disulfides connect Cys-829-Cys-851, Cys-889-Cys-919, and Cys-946-Cys-968. Residues Arg-963 and Arg-966 each carry the omega-N-methylarginine modification.

Requires Zn(2+) as cofactor.

The protein localises to the secreted. Its function is as follows. Protease which specifically processes pro-lysyl oxidase. Required for the embryonic development. Predominant protease, which in the development, influences dorsal-ventral patterning and skeletogenesis. The protein is Tolloid-like protein 2 (TLL2) of Homo sapiens (Human).